Here is a 157-residue protein sequence, read N- to C-terminus: NADPH-dependent 7-cyano-7-deazaguanine reductase (157 aa).

The active-site Thioimide intermediate is the Cys-55. Residue Asp-62 is the Proton donor of the active site. Substrate is bound by residues 77–79 (VES) and 96–97 (HE).

This sequence belongs to the GTP cyclohydrolase I family. QueF type 1 subfamily.

It is found in the cytoplasm. It carries out the reaction 7-aminomethyl-7-carbaguanine + 2 NADP(+) = 7-cyano-7-deazaguanine + 2 NADPH + 3 H(+). Its pathway is tRNA modification; tRNA-queuosine biosynthesis. Its function is as follows. Catalyzes the NADPH-dependent reduction of 7-cyano-7-deazaguanine (preQ0) to 7-aminomethyl-7-deazaguanine (preQ1). The sequence is that of NADPH-dependent 7-cyano-7-deazaguanine reductase from Neisseria gonorrhoeae (strain ATCC 700825 / FA 1090).